The following is a 1062-amino-acid chain: Carbamoyl phosphate synthase pyrimidine-specific large chain (1062 aa).

Residues 1 to 401 (MGKREDIKKI…SLLKAVRSLE (401 aa)) form a carboxyphosphate synthetic domain region. The ATP site is built by R129, R169, G175, G176, K208, I210, E215, G241, V242, H243, Q284, and E298. One can recognise an ATP-grasp 1 domain in the interval 133–327 (RALMKELNEP…IAKIAAKIAV (195 aa)). 3 residues coordinate Mg(2+): Q284, E298, and N300. Mn(2+) is bound by residues Q284, E298, and N300. Residues 402–546 (AGVYHLDQPD…YGTYEEENES (145 aa)) form an oligomerization domain region. Positions 547 to 929 (ERTDKKSILV…ALYKGLIASG (383 aa)) are carbamoyl phosphate synthetic domain. Residues 671–861 (EQTLVELNIP…MANVATKVML (191 aa)) form the ATP-grasp 2 domain. Residues R707, R746, L748, E752, G777, V778, H779, S780, Q820, and E832 each coordinate ATP. Residues Q820, E832, and N834 each coordinate Mg(2+). Mn(2+)-binding residues include Q820, E832, and N834. Residues 930 to 1062 (MSIPTHGSVL…FSAESMPVMQ (133 aa)) enclose the MGS-like domain. Positions 930 to 1062 (MSIPTHGSVL…FSAESMPVMQ (133 aa)) are allosteric domain.

The protein belongs to the CarB family. As to quaternary structure, composed of two chains; the small (or glutamine) chain promotes the hydrolysis of glutamine to ammonia, which is used by the large (or ammonia) chain to synthesize carbamoyl phosphate. Tetramer of heterodimers (alpha,beta)4. Mg(2+) serves as cofactor. Requires Mn(2+) as cofactor.

It carries out the reaction hydrogencarbonate + L-glutamine + 2 ATP + H2O = carbamoyl phosphate + L-glutamate + 2 ADP + phosphate + 2 H(+). The catalysed reaction is hydrogencarbonate + NH4(+) + 2 ATP = carbamoyl phosphate + 2 ADP + phosphate + 2 H(+). The protein operates within amino-acid biosynthesis; L-arginine biosynthesis; carbamoyl phosphate from bicarbonate: step 1/1. It participates in pyrimidine metabolism; UMP biosynthesis via de novo pathway; (S)-dihydroorotate from bicarbonate: step 1/3. Small subunit of the glutamine-dependent carbamoyl phosphate synthetase (CPSase). CPSase catalyzes the formation of carbamoyl phosphate from the ammonia moiety of glutamine, carbonate, and phosphate donated by ATP, constituting the first step of the biosynthetic pathway leading to pyrimidine nucleotides. The large subunit (synthetase) binds the substrates ammonia (free or transferred from glutamine from the small subunit), hydrogencarbonate and ATP and carries out an ATP-coupled ligase reaction, activating hydrogencarbonate by forming carboxy phosphate which reacts with ammonia to form carbamoyl phosphate. This is Carbamoyl phosphate synthase pyrimidine-specific large chain (pyrAB) from Halalkalibacterium halodurans (strain ATCC BAA-125 / DSM 18197 / FERM 7344 / JCM 9153 / C-125) (Bacillus halodurans).